A 249-amino-acid chain; its full sequence is 1-(5-phosphoribosyl)-5-[(5-phosphoribosylamino)methylideneamino] imidazole-4-carboxamide isomerase (249 aa).

The active-site Proton acceptor is the Asp11. The active-site Proton donor is Asp133.

This sequence belongs to the HisA/HisF family.

The protein resides in the cytoplasm. It catalyses the reaction 1-(5-phospho-beta-D-ribosyl)-5-[(5-phospho-beta-D-ribosylamino)methylideneamino]imidazole-4-carboxamide = 5-[(5-phospho-1-deoxy-D-ribulos-1-ylimino)methylamino]-1-(5-phospho-beta-D-ribosyl)imidazole-4-carboxamide. The protein operates within amino-acid biosynthesis; L-histidine biosynthesis; L-histidine from 5-phospho-alpha-D-ribose 1-diphosphate: step 4/9. The polypeptide is 1-(5-phosphoribosyl)-5-[(5-phosphoribosylamino)methylideneamino] imidazole-4-carboxamide isomerase (Haemophilus influenzae (strain 86-028NP)).